Here is a 651-residue protein sequence, read N- to C-terminus: Acid beta-fructofuranosidase (651 aa).

Residues 1 to 23 (MEHHKPLLPTSSHAAPNPRTRKD) are Cytoplasmic-facing. The propeptide at 1-103 (MEHHKPLLPT…LFSGEGGASE (103 aa)) is removed in mature form. Residues 24-44 (LLLLLCALLFLSSLVAFGRNR) form a helical; Signal-anchor for type II membrane protein membrane-spanning segment. Residues 45-651 (ASNVPHDHVS…PFPFNPDQKN (607 aa)) are Lumenal-facing. A disordered region spans residues 48 to 76 (VPHDHVSSSASNHQQEHQSPTSLPSSKWH). A compositionally biased stretch (polar residues) spans 54–72 (SSSASNHQQEHQSPTSLPS). Residues 127–130 (WMND), Gln-146, Trp-154, and 189–190 (WT) contribute to the substrate site. Residue Asp-130 is part of the active site. An N-linked (GlcNAc...) asparagine glycan is attached at Asn-210. 253–254 (RD) lines the substrate pocket. N-linked (GlcNAc...) asparagine glycosylation occurs at Asn-275. Substrate-binding residues include Glu-308 and Asp-343. The cysteines at positions 500 and 548 are disulfide-linked. Asn-620 is a glycosylation site (N-linked (GlcNAc...) asparagine).

Belongs to the glycosyl hydrolase 32 family. As to quaternary structure, may be present in two forms, a 70 kDa monomer and a heterodimer of the 30 kDa and 38 kDa subunits. The ratio of the levels of the two forms within cells appears to be regulated developmentally.

The protein localises to the membrane. The protein resides in the vacuole lumen. The catalysed reaction is Hydrolysis of terminal non-reducing beta-D-fructofuranoside residues in beta-D-fructofuranosides.. It participates in glycan biosynthesis; sucrose metabolism. The sequence is that of Acid beta-fructofuranosidase from Phaseolus vulgaris (Kidney bean).